Here is a 207-residue protein sequence, read N- to C-terminus: Ribosomal RNA small subunit methyltransferase G (207 aa).

S-adenosyl-L-methionine is bound by residues glycine 74, phenylalanine 79, 124–125 (VE), and arginine 138.

Belongs to the methyltransferase superfamily. RNA methyltransferase RsmG family.

The protein localises to the cytoplasm. It catalyses the reaction guanosine(527) in 16S rRNA + S-adenosyl-L-methionine = N(7)-methylguanosine(527) in 16S rRNA + S-adenosyl-L-homocysteine. Specifically methylates the N7 position of guanine in position 527 of 16S rRNA. In Hyphomonas neptunium (strain ATCC 15444), this protein is Ribosomal RNA small subunit methyltransferase G.